Reading from the N-terminus, the 254-residue chain is Homeobox protein Nkx-6.3 (254 aa).

Disordered regions lie at residues 112 to 140 and 191 to 228; these read QDWRGGNPALSSASNTEGSSRKKHTRPTF and KSAVETPGLPSLSTRAPGDLIPSDNEDDEYSKPLDPDS. A compositionally biased stretch (polar residues) spans 120 to 129; it reads ALSSASNTEG. The homeobox DNA-binding region spans 133–192; sequence KKHTRPTFTGHQIFALEKTFEQTKYLAGPERARLAFSLGMSESQVKVWFQNRRTKWRKKS.

It localises to the nucleus. In terms of biological role, putative transcription factor, which may be involved in patterning of central nervous system and pancreas. In Xenopus laevis (African clawed frog), this protein is Homeobox protein Nkx-6.3 (nkx6-3).